Here is a 293-residue protein sequence, read N- to C-terminus: 4-hydroxy-tetrahydrodipicolinate synthase (293 aa).

Residue Thr46 coordinates pyruvate. Tyr133 serves as the catalytic Proton donor/acceptor. The active-site Schiff-base intermediate with substrate is the Lys161. Position 202 (Val202) interacts with pyruvate.

This sequence belongs to the DapA family. As to quaternary structure, homotetramer; dimer of dimers.

It localises to the cytoplasm. It catalyses the reaction L-aspartate 4-semialdehyde + pyruvate = (2S,4S)-4-hydroxy-2,3,4,5-tetrahydrodipicolinate + H2O + H(+). The protein operates within amino-acid biosynthesis; L-lysine biosynthesis via DAP pathway; (S)-tetrahydrodipicolinate from L-aspartate: step 3/4. In terms of biological role, catalyzes the condensation of (S)-aspartate-beta-semialdehyde [(S)-ASA] and pyruvate to 4-hydroxy-tetrahydrodipicolinate (HTPA). The protein is 4-hydroxy-tetrahydrodipicolinate synthase of Wolbachia pipientis subsp. Culex pipiens (strain wPip).